A 231-amino-acid chain; its full sequence is Large ribosomal subunit protein uL1 (231 aa).

The protein belongs to the universal ribosomal protein uL1 family. In terms of assembly, part of the 50S ribosomal subunit.

Binds directly to 23S rRNA. The L1 stalk is quite mobile in the ribosome, and is involved in E site tRNA release. Its function is as follows. Protein L1 is also a translational repressor protein, it controls the translation of the L11 operon by binding to its mRNA. In Chlorobaculum tepidum (strain ATCC 49652 / DSM 12025 / NBRC 103806 / TLS) (Chlorobium tepidum), this protein is Large ribosomal subunit protein uL1.